The primary structure comprises 275 residues: Large ribosomal subunit protein uL2 (275 aa).

Residues 222–275 (GVAMNPVDHPMGGGEGRSSGGRHPCSPWGMPTKGYKTRKNKTTDKFIVRKRNKR) form a disordered region.

This sequence belongs to the universal ribosomal protein uL2 family. As to quaternary structure, part of the 50S ribosomal subunit. Forms a bridge to the 30S subunit in the 70S ribosome.

Its function is as follows. One of the primary rRNA binding proteins. Required for association of the 30S and 50S subunits to form the 70S ribosome, for tRNA binding and peptide bond formation. It has been suggested to have peptidyltransferase activity; this is somewhat controversial. Makes several contacts with the 16S rRNA in the 70S ribosome. This chain is Large ribosomal subunit protein uL2, found in Desulfatibacillum aliphaticivorans.